We begin with the raw amino-acid sequence, 628 residues long: Biosynthetic arginine decarboxylase (628 aa).

The residue at position 99 (lysine 99) is an N6-(pyridoxal phosphate)lysine. A substrate-binding site is contributed by 279 to 289; it reads VDVGGGLGIDY.

This sequence belongs to the Orn/Lys/Arg decarboxylase class-II family. SpeA subfamily. Mg(2+) serves as cofactor. The cofactor is pyridoxal 5'-phosphate.

The enzyme catalyses L-arginine + H(+) = agmatine + CO2. In terms of biological role, catalyzes the biosynthesis of agmatine from arginine. This is Biosynthetic arginine decarboxylase from Xylella fastidiosa (strain 9a5c).